The sequence spans 104 residues: MQQNQKIRIRLKAFDYRLIDQSAAEIVETAKRTGAIVKGPVPLPTRIQRFDVLRSPHVNKTSRDQFEIRTHQRLMDIVDPTDKTVDALMKLDLPAGVDVEIKLQ.

Belongs to the universal ribosomal protein uS10 family. Part of the 30S ribosomal subunit.

Its function is as follows. Involved in the binding of tRNA to the ribosomes. The polypeptide is Small ribosomal subunit protein uS10 (Ralstonia nicotianae (strain ATCC BAA-1114 / GMI1000) (Ralstonia solanacearum)).